Reading from the N-terminus, the 1150-residue chain is MKLSRQFTVFGSAIFCVVIFSLYLMLDRGHLDYPRGPRQEGSFPQGQLSILQEKIDHLERLLAENNEIISNIRDSVINLSESVEDGPRGSPGNASQGSIHLHSPQLALQADPRDCLFASQSGSQPRDVQMLDVYDLIPFDNPDGGVWKQGFDIKYEADEWDHEPLQVFVVPHSHNDPGWLKTFNDYFRDKTQYIFNNMVLKLKEDSSRKFMWSEISYLAKWWDIIDIPKKEAVKSLLQNGQLEIVTGGWVMPDEATPHYFALIDQLIEGHQWLEKNLGVKPRSGWAIDPFGHSPTMAYLLKRAGFSHMLIQRVHYAIKKHFSLHKTLEFFWRQNWDLGSATDILCHMMPFYSYDIPHTCGPDPKICCQFDFKRLPGGRYGCPWGVPPEAISPGNVQSRAQMLLDQYRKKSKLFRTKVLLAPLGDDFRFSEYTEWDLQCRNYEQLFSYMNSQPHLKVKIQFGTLSDYFDALEKAVAAEKKSSQSVFPALSGDFFTYADRDDHYWSGYFTSRPFYKRMDRIMESRIRAAEILYQLALKQAQKYKINKFLSSPHYTTLTEARRNLGLFQHHDAITGTAKDWVVVDYGTRLFQSLNSLEKIIGDSAFLLILKDKKLYQSDPSKAFLEMDTKQSSQDSLPQKIIIQLSAQEPRYLVVYNPFEQERHSVVSIRVNSATVKVLSDSGKPVEVQVSAVWNDMRTISQAAYEVSFLAHIPPLGLKVFKILESQSSSSHLADYVLYNNDGLAENGIFHVKNMVDAGDAITIENPFLAIWFDRSGLMEKVRRKEDSRQHELKVQFLWYGTTNKRDKSGAYLFLPDGQGQPYVSLRPPFVRVTRGRIYSDVTCFLEHVTHKVRLYNIQGIEGQSMEVSNIVNIRNVHNREIVMRISSKINNQNRYYTDLNGYQIQPRRTMSKLPLQANVYPMCTMAYIQDAEHRLTLLSAQSLGASSMASGQIEVFMDRRLMQDDNRGLGQGVHDNKITANLFRILLEKRSAVNMEEEKKSPVSYPSLLSHMTSSFLNHPFLPMVLSGQLPSPAFELLSEFPLLQSSLPCDIHLVNLRTIQSKMGKGYSDEAALILHRKGFDCQFSSRGIGLPCSTTQGKMSVLKLFNKFAVESLVPSSLSLMHSPPDAQNMSEVSLSPMEISTFRIRLRWT.

Residues Met1–Arg5 are Cytoplasmic-facing. The chain crosses the membrane as a helical; Signal-anchor for type II membrane protein span at residues Gln6 to Leu26. Topologically, residues Asp27–Thr1150 are lumenal. A glycan (N-linked (GlcNAc...) asparagine) is linked at Asn78. A phosphoserine mark is found at Ser80 and Ser82. The N-linked (GlcNAc...) asparagine glycan is linked to Asn93. Zn(2+) contacts are provided by His174, Asp176, Asp288, and His568. Catalysis depends on Asp288, which acts as the Nucleophile. Residue Asn1129 is glycosylated (N-linked (GlcNAc...) asparagine).

Belongs to the glycosyl hydrolase 38 family. In terms of assembly, homodimer; disulfide-linked. Zn(2+) is required as a cofactor. Post-translationally, glycosylated. In terms of tissue distribution, all tissues, mostly in adrenal and thymus.

Its subcellular location is the golgi apparatus membrane. It catalyses the reaction N(4)-{beta-D-GlcNAc-(1-&gt;2)-alpha-D-Man-(1-&gt;3)-[alpha-D-Man-(1-&gt;3)-[alpha-D-Man-(1-&gt;6)]-alpha-D-Man-(1-&gt;6)]-beta-D-Man-(1-&gt;4)-beta-D-GlcNAc-(1-&gt;4)-beta-D-GlcNAc}-L-asparaginyl-[protein] + 2 H2O = 2 alpha-D-mannopyranose + an N(4)-{beta-D-GlcNAc-(1-&gt;2)-alpha-D-Man-(1-&gt;3)-[alpha-D-Man-(1-&gt;6)]-beta-D-Man-(1-&gt;4)-beta-D-GlcNAc-(1-&gt;4)-beta-D-GlcNAc}-L-asparaginyl-[protein]. The protein operates within protein modification; protein glycosylation. Catalyzes the first committed step in the biosynthesis of complex N-glycans. It controls conversion of high mannose to complex N-glycans; the final hydrolytic step in the N-glycan maturation pathway. The chain is Alpha-mannosidase 2 (Man2a1) from Mus musculus (Mouse).